The sequence spans 884 residues: Alanine--tRNA ligase (884 aa).

Residues histidine 562, histidine 566, cysteine 674, and histidine 678 each contribute to the Zn(2+) site.

It belongs to the class-II aminoacyl-tRNA synthetase family. Requires Zn(2+) as cofactor.

It localises to the cytoplasm. It catalyses the reaction tRNA(Ala) + L-alanine + ATP = L-alanyl-tRNA(Ala) + AMP + diphosphate. Its function is as follows. Catalyzes the attachment of alanine to tRNA(Ala) in a two-step reaction: alanine is first activated by ATP to form Ala-AMP and then transferred to the acceptor end of tRNA(Ala). Also edits incorrectly charged Ser-tRNA(Ala) and Gly-tRNA(Ala) via its editing domain. This chain is Alanine--tRNA ligase, found in Rhizobium johnstonii (strain DSM 114642 / LMG 32736 / 3841) (Rhizobium leguminosarum bv. viciae).